A 206-amino-acid chain; its full sequence is Large ribosomal subunit protein bL25 (206 aa).

This sequence belongs to the bacterial ribosomal protein bL25 family. CTC subfamily. In terms of assembly, part of the 50S ribosomal subunit; part of the 5S rRNA/L5/L18/L25 subcomplex. Contacts the 5S rRNA. Binds to the 5S rRNA independently of L5 and L18.

Functionally, this is one of the proteins that binds to the 5S RNA in the ribosome where it forms part of the central protuberance. The polypeptide is Large ribosomal subunit protein bL25 (Paraburkholderia phytofirmans (strain DSM 17436 / LMG 22146 / PsJN) (Burkholderia phytofirmans)).